A 58-amino-acid chain; its full sequence is UPF0391 membrane protein GM21_0108 (58 aa).

2 helical membrane passes run 4 to 24 and 33 to 53; these read WALIFFIIAIIAAVFGFGGIA and VLFYLFLVVAVVMLVSALLAG.

It belongs to the UPF0391 family.

It is found in the cell membrane. This is UPF0391 membrane protein GM21_0108 from Geobacter sp. (strain M21).